We begin with the raw amino-acid sequence, 430 residues long: D-galactonate transporter (430 aa).

Over 1–17 (MDIPVNAAKPGRRRYLT) the chain is Cytoplasmic. Residues 18 to 39 (LVMIFITVVICYVDRANLAVAS) form a helical membrane-spanning segment. D-galactonate-binding residues include tyrosine 29 and arginine 32. Residues 40-50 (AHIQEEFGITK) are Periplasmic-facing. The helical transmembrane segment at 51–74 (AEMGYVFSAFAWLYTLCQIPGGWF) threads the bilayer. Residue tyrosine 64 coordinates D-galactonate. Over 75-81 (LDRVGSR) the chain is Cytoplasmic. Residues 82–100 (VTYFIAIFGWSVATLFQGF) form a helical membrane-spanning segment. Residues 101 to 103 (ATG) lie on the Periplasmic side of the membrane. The helical transmembrane segment at 104–125 (LMSLIGLRAITGIFEAPAFPTN) threads the bilayer. The Cytoplasmic segment spans residues 126–141 (NRMVTSWFPEHERASA). Residues 142-164 (VGFYTSGQFVGLAFLTPLLIWIQ) form a helical membrane-spanning segment. The Periplasmic segment spans residues 165 to 168 (EMLS). Residues 169–190 (WHWVFIVTGGIGIIWSLIWFKV) form a helical membrane-spanning segment. Residues 191 to 241 (YQPPRLTKGISKAELDYIRDGGGLVDGDAPVKKEARQPLTAKDWKLVFHRK) are Cytoplasmic-facing. A helical membrane pass occupies residues 242 to 267 (LIGVYLGQFAVASTLWFFLTWFPNYL). Over 268–276 (TQEKGITAL) the chain is Periplasmic. Residues 277 to 297 (KAGFMTTVPFLAAFVGVLLSG) traverse the membrane as a helical segment. The Cytoplasmic portion of the chain corresponds to 298 to 314 (WVADLLVRKGFSLGFAR). Residues 315–333 (KTPIICGLLISTCIMGANY) traverse the membrane as a helical segment. Over 334–336 (TND) the chain is Periplasmic. Residues 337–354 (PMMIMCLMALAFFGNGFA) traverse the membrane as a helical segment. Residues 355–373 (SITWSLVSSLAPMRLIGLT) are Cytoplasmic-facing. Tryptophan 358 lines the D-galactonate pocket. Residues 374–395 (GGVFNFAGGLGGITVPLVVGYL) form a helical membrane-spanning segment. The Periplasmic portion of the chain corresponds to 396–400 (AQGYG). Residues 401 to 423 (FAPALVYISAVALIGALSYILLV) form a helical membrane-spanning segment. Residues 424-430 (GDVKRVG) lie on the Cytoplasmic side of the membrane.

Belongs to the major facilitator superfamily. Phthalate permease family.

It is found in the cell inner membrane. The catalysed reaction is D-galactonate(in) + H(+)(in) = D-galactonate(out) + H(+)(out). Its function is as follows. Involved in D-galactonate metabolism. Catalyzes the proton-dependent uptake of galactonate into the cell. This chain is D-galactonate transporter (dgoT), found in Escherichia coli O6:H1 (strain CFT073 / ATCC 700928 / UPEC).